Reading from the N-terminus, the 150-residue chain is MESANASTPAKTIDQLCKECNLSMHSLQILCVFCRKTLSTAEVYAFQYKSLYIVWRGQFPFAACACCLEIQGKINQFRHFDFAGFAVTVEEDTKQSILDVLIRCYLCHKPLCEVEKLRHILQKARFIKLNSSWKGRCFHCWSSCMENILP.

Zinc fingers lie at residues 31–67 and 104–140; these read CVFCRKTLSTAEVYAFQYKSLYIVWRGQFPFAACACC and CYLCHKPLCEVEKLRHILQKARFIKLNSSWKGRCFHC.

Belongs to the papillomaviridae E6 protein family. Forms homodimers. Interacts with ubiquitin-protein ligase UBE3A/E6-AP; this interaction stimulates UBE3A ubiquitin activity. Interacts with host TP53 and EP300; this interaction inhibits TP53 activity.

The protein localises to the host cytoplasm. The protein resides in the host nucleus. Its function is as follows. Plays a major role in the induction and maintenance of cellular transformation. E6 associates with host UBE3A/E6-AP ubiquitin-protein ligase and modulates its activity. Sequesters tumor suppressor TP53 in the host cytoplasm and modulates its activity by interacting with host EP300 that results in the reduction of TP53 acetylation and activation. In turn, apoptosis induced by DNA damage is inhibited. E6 also protects host keratinocytes from apoptosis by mediating the degradation of host BAK1. May also inhibit host immune response. This Human papillomavirus 13 protein is Protein E6.